The chain runs to 353 residues: DNA integrity scanning protein DisA (353 aa).

One can recognise a DAC domain in the interval 6–144; it reads DKELMNILKI…GGIKYVLRDS (139 aa). ATP is bound by residues Gly-73, Leu-91, and 104 to 108; that span reads TRHRT.

It belongs to the DisA family. Homooctamer. Mg(2+) is required as a cofactor.

The enzyme catalyses 2 ATP = 3',3'-c-di-AMP + 2 diphosphate. In terms of biological role, participates in a DNA-damage check-point that is active prior to asymmetric division when DNA is damaged. DisA forms globular foci that rapidly scan along the chromosomes during sporulation, searching for lesions. When a lesion is present, DisA pauses at the lesion site. This triggers a cellular response that culminates in a temporary block in sporulation initiation. Also has diadenylate cyclase activity, catalyzing the condensation of 2 ATP molecules into cyclic di-AMP (c-di-AMP). c-di-AMP acts as a signaling molecule that couples DNA integrity with progression of sporulation. The rise in c-di-AMP level generated by DisA while scanning the chromosome, operates as a positive signal that advances sporulation; upon encountering a lesion, the DisA focus arrests at the damaged site and halts c-di-AMP synthesis. In Clostridium botulinum (strain Okra / Type B1), this protein is DNA integrity scanning protein DisA.